Consider the following 265-residue polypeptide: Shikimate dehydrogenase (NADP(+)) (265 aa).

Shikimate-binding positions include 15 to 17 (SKS) and T62. The active-site Proton acceptor is K66. Shikimate contacts are provided by N87 and D102. NADP(+)-binding positions include 127–131 (GAGGA), 151–156 (NRTVSR), and M212. Y214 contributes to the shikimate binding site. G234 is a binding site for NADP(+).

It belongs to the shikimate dehydrogenase family. In terms of assembly, homodimer.

The enzyme catalyses shikimate + NADP(+) = 3-dehydroshikimate + NADPH + H(+). The protein operates within metabolic intermediate biosynthesis; chorismate biosynthesis; chorismate from D-erythrose 4-phosphate and phosphoenolpyruvate: step 4/7. In terms of biological role, involved in the biosynthesis of the chorismate, which leads to the biosynthesis of aromatic amino acids. Catalyzes the reversible NADPH linked reduction of 3-dehydroshikimate (DHSA) to yield shikimate (SA). The chain is Shikimate dehydrogenase (NADP(+)) from Thiobacillus denitrificans (strain ATCC 25259 / T1).